A 695-amino-acid polypeptide reads, in one-letter code: Sodium-dependent phosphate transport protein 2B (695 aa).

The disordered stretch occupies residues 1–44 (MAPWPELENAHPNPNKFIEGASGPQSSIPDKDKGTSKTNDSGTP). Residues 1–90 (MAPWPELENA…KWSERDSKGK (90 aa)) lie on the Cytoplasmic side of the membrane. Residues 91 to 111 (ILCIFQGIGKFILLLGFLYLF) traverse the membrane as a helical segment. The Extracellular segment spans residues 112 to 136 (VCSLDVLSSAFQLVGGKMAGQFFSN). Residues 137–157 (NSIMSNPVAGLVIGVLVTVMV) traverse the membrane as a helical segment. Residues 158 to 213 (QSSSTSSSIIVSMVASSLLSVRAAIPIIMGANIGTSITNTIVALMQAGDRNEFRRA) are Cytoplasmic-facing. A helical transmembrane segment spans residues 214–234 (FAGATVHDFFNWLSVLVLLPL). The Extracellular segment spans residues 235-363 (EAATHYLEKL…FVNFSLPDLA (129 aa)). N-linked (GlcNAc...) asparagine glycans are attached at residues Asn-295, Asn-313, Asn-321, Asn-340, and Asn-356. Cys-303 and Cys-350 are oxidised to a cystine. A helical transmembrane segment spans residues 364 to 384 (VGIILLTVSLLILCGCLIMIV). Residues 385-408 (KLLGSVLRGQVATVIKKTLNTDFP) lie on the Cytoplasmic side of the membrane. A helical transmembrane segment spans residues 409–429 (FPFAWLTGYLAILVGAGMTFI). At 430-486 (VQSSSVFTSAMTPLIGIGVISIERAYPLTLGSNIGTTTTAILAALASPGNTLRSSLQ) the chain is on the extracellular side. A helical membrane pass occupies residues 487–507 (IALCHFFFNISGILLWYPIPF). Topologically, residues 508 to 526 (TRLPIRLAKGLGNISAKYR) are cytoplasmic. The chain crosses the membrane as a helical span at residues 527–547 (WFAVFYLIFFFLLTPLTVFGL). The Extracellular portion of the chain corresponds to 548 to 551 (SLAG). A helical transmembrane segment spans residues 552-572 (WPVLVGVGVPIILLILLVLCL). Topologically, residues 573 to 695 (RMLQARCPRI…MKALSNTTVF (123 aa)) are cytoplasmic.

Belongs to the SLC34A transporter family. Highly expressed in the lung, in type II alveolar cells. Moderately expressed in kidney followed by small intestine.

It is found in the apical cell membrane. It catalyses the reaction 3 Na(+)(out) + phosphate(out) = 3 Na(+)(in) + phosphate(in). Involved in actively transporting phosphate into cells via Na(+) cotransport. In Rattus norvegicus (Rat), this protein is Sodium-dependent phosphate transport protein 2B (Slc34a2).